Consider the following 654-residue polypeptide: tRNA 5-methylaminomethyl-2-thiouridine biosynthesis bifunctional protein MnmC (654 aa).

The interval 1–236 (MSTLLQHAQI…KWEVMSGAYV (236 aa)) is tRNA (mnm(5)s(2)U34)-methyltransferase. Residues 262 to 654 (IGAGLAGSTT…FALRRLIRGK (393 aa)) are FAD-dependent cmnm(5)s(2)U34 oxidoreductase.

This sequence in the N-terminal section; belongs to the methyltransferase superfamily. tRNA (mnm(5)s(2)U34)-methyltransferase family. The protein in the C-terminal section; belongs to the DAO family. FAD is required as a cofactor.

It localises to the cytoplasm. It catalyses the reaction 5-aminomethyl-2-thiouridine(34) in tRNA + S-adenosyl-L-methionine = 5-methylaminomethyl-2-thiouridine(34) in tRNA + S-adenosyl-L-homocysteine + H(+). Catalyzes the last two steps in the biosynthesis of 5-methylaminomethyl-2-thiouridine (mnm(5)s(2)U) at the wobble position (U34) in tRNA. Catalyzes the FAD-dependent demodification of cmnm(5)s(2)U34 to nm(5)s(2)U34, followed by the transfer of a methyl group from S-adenosyl-L-methionine to nm(5)s(2)U34, to form mnm(5)s(2)U34. The polypeptide is tRNA 5-methylaminomethyl-2-thiouridine biosynthesis bifunctional protein MnmC (Pseudomonas putida (strain GB-1)).